Consider the following 269-residue polypeptide: Cytochrome c oxidase subunit 3 (269 aa).

The next 7 helical transmembrane spans lie at 21–41, 45–65, 90–110, 138–160, 167–187, 205–225, and 247–267; these read PWPI…ALTM, IGHM…ATLW, GFLL…WAYF, PLLN…HGLV, ALSG…CQYI, FYAG…MLGI, and VLYC…FYWW.

It belongs to the cytochrome c oxidase subunit 3 family. As to quaternary structure, component of the cytochrome c oxidase (complex IV, CIV), a multisubunit enzyme composed of a catalytic core of 3 subunits and several supernumerary subunits. The complex exists as a monomer or a dimer and forms supercomplexes (SCs) in the inner mitochondrial membrane with ubiquinol-cytochrome c oxidoreductase (cytochrome b-c1 complex, complex III, CIII).

Its subcellular location is the mitochondrion inner membrane. It catalyses the reaction 4 Fe(II)-[cytochrome c] + O2 + 8 H(+)(in) = 4 Fe(III)-[cytochrome c] + 2 H2O + 4 H(+)(out). In terms of biological role, component of the cytochrome c oxidase, the last enzyme in the mitochondrial electron transport chain which drives oxidative phosphorylation. The respiratory chain contains 3 multisubunit complexes succinate dehydrogenase (complex II, CII), ubiquinol-cytochrome c oxidoreductase (cytochrome b-c1 complex, complex III, CIII) and cytochrome c oxidase (complex IV, CIV), that cooperate to transfer electrons derived from NADH and succinate to molecular oxygen, creating an electrochemical gradient over the inner membrane that drives transmembrane transport and the ATP synthase. Cytochrome c oxidase is the component of the respiratory chain that catalyzes the reduction of oxygen to water. Electrons originating from reduced cytochrome c in the intermembrane space (IMS) are transferred via the dinuclear copper A center (CU(A)) of subunit 2 and heme A of subunit 1 to the active site in subunit 1, a binuclear center (BNC) formed by heme A3 and copper B (CU(B)). The BNC reduces molecular oxygen to 2 water molecules using 4 electrons from cytochrome c in the IMS and 4 protons from the mitochondrial matrix. The protein is Cytochrome c oxidase subunit 3 (COX3) of Kluyveromyces lactis (strain ATCC 8585 / CBS 2359 / DSM 70799 / NBRC 1267 / NRRL Y-1140 / WM37) (Yeast).